A 131-amino-acid polypeptide reads, in one-letter code: Small ribosomal subunit protein uS8 (131 aa).

It belongs to the universal ribosomal protein uS8 family. In terms of assembly, part of the 30S ribosomal subunit. Contacts proteins S5 and S12.

Functionally, one of the primary rRNA binding proteins, it binds directly to 16S rRNA central domain where it helps coordinate assembly of the platform of the 30S subunit. This is Small ribosomal subunit protein uS8 from Albidiferax ferrireducens (strain ATCC BAA-621 / DSM 15236 / T118) (Rhodoferax ferrireducens).